Here is a 459-residue protein sequence, read N- to C-terminus: Serine protease HTRA3 (459 aa).

A signal peptide spans 1 to 23 (MQARALLPATLATLATLAVSVLA). One can recognise an IGFBP N-terminal domain in the interval 27-90 (PAAPCPARCD…ECVRGVCRCR (64 aa)). Disulfide bonds link Cys-31/Cys-54, Cys-35/Cys-56, Cys-40/Cys-57, Cys-45/Cys-60, Cys-68/Cys-82, Cys-76/Cys-87, Cys-89/Cys-107, and Cys-96/Cys-132. The 59-residue stretch at 76-134 (CGDSLECVRGVCRCRWTHTVCGTDGHTYADVCALQAASRRALQISGTPVRQLQKGACPS) folds into the Kazal-like domain. Residues 181-346 (GSGFIMSEAG…AIPSDRITRF (166 aa)) are serine protease. Catalysis depends on charge relay system residues His-197, Asp-233, and Ser-311. The PDZ domain occupies 365 to 450 (IRMRTITPSL…EVRRGNDDLL (86 aa)).

This sequence belongs to the peptidase S1C family. In terms of assembly, homotrimer. Interacts with TGFB1; the interaction inhibits TGFB-mediated signaling. Interacts with BMP4; the interaction inhibits BMP4-mediated signaling. Interacts with TGFB2, GDF5 and MYH9. As to expression, expressed in the ovary, essentially in granulosa cells in a follicle-stage specific manner. Highest levels found in large luteinizing granulosa cells.

The protein resides in the secreted. Serine protease that cleaves beta-casein/CSN2 as well as several extracellular matrix (ECM) proteoglycans such as decorin/DCN, biglycan/BGN and fibronectin/FN1. Inhibits signaling mediated by TGF-beta family proteins possibly indirectly by degradation of these ECM proteoglycans. May act as a tumor suppressor. Negatively regulates, in vitro, trophoblast invasion during placental development and may be involved in the development of the placenta in vivo. May also have a role in ovarian development, granulosa cell differentiation and luteinization. The sequence is that of Serine protease HTRA3 (Htra3) from Rattus norvegicus (Rat).